The sequence spans 302 residues: HPr kinase/phosphorylase (302 aa).

Catalysis depends on residues H136 and K157. 151-158 is an ATP binding site; it reads GESGIGKS. S158 provides a ligand contact to Mg(2+). D175 (proton acceptor; for phosphorylation activity. Proton donor; for dephosphorylation activity) is an active-site residue. Positions 198–207 are important for the catalytic mechanism of both phosphorylation and dephosphorylation; that stretch reads LEVRGLGIID. Position 199 (E199) interacts with Mg(2+). R240 is a catalytic residue. The interval 261–266 is important for the catalytic mechanism of dephosphorylation; the sequence is PIRPGR.

It belongs to the HPrK/P family. In terms of assembly, homohexamer. It depends on Mg(2+) as a cofactor.

It catalyses the reaction [HPr protein]-L-serine + ATP = [HPr protein]-O-phospho-L-serine + ADP + H(+). The catalysed reaction is [HPr protein]-O-phospho-L-serine + phosphate + H(+) = [HPr protein]-L-serine + diphosphate. Catalyzes the ATP- as well as the pyrophosphate-dependent phosphorylation of a specific serine residue in HPr, a phosphocarrier protein of the phosphoenolpyruvate-dependent sugar phosphotransferase system (PTS). HprK/P also catalyzes the pyrophosphate-producing, inorganic phosphate-dependent dephosphorylation (phosphorolysis) of seryl-phosphorylated HPr (P-Ser-HPr). The two antagonistic activities of HprK/P are regulated by several intracellular metabolites, which change their concentration in response to the absence or presence of rapidly metabolisable carbon sources (glucose, fructose, etc.) in the growth medium. Therefore, by controlling the phosphorylation state of HPr, HPrK/P is a sensor enzyme that plays a major role in the regulation of carbon metabolism and sugar transport: it mediates carbon catabolite repression (CCR), and regulates PTS-catalyzed carbohydrate uptake and inducer exclusion. This Clostridium beijerinckii (strain ATCC 51743 / NCIMB 8052) (Clostridium acetobutylicum) protein is HPr kinase/phosphorylase.